A 342-amino-acid polypeptide reads, in one-letter code: WW domain binding protein 1-like (342 aa).

A helical transmembrane segment spans residues 42–62; sequence LWWFWLVWTIIIILSCCCVCH. 2 disordered regions span residues 133–247 and 292–320; these read LPPQ…RRFT and PGDE…RPPA. Residues 158-173 are compositionally biased toward low complexity; it reads SSPLSEPSRSSTRPPS. Position 173 is a phosphoserine (Ser-173). Over residues 212–240 the composition is skewed to basic and acidic residues; that stretch reads LDKDAECREELLKDDSSEHGAPDSKEKTP.

It is found in the membrane. The sequence is that of WW domain binding protein 1-like (WBP1L) from Homo sapiens (Human).